The chain runs to 832 residues: Protein P (832 aa).

The interval methionine 1–glutamine 177 is terminal protein domain (TP). The interval glutamate 178–leucine 335 is spacer. The disordered stretch occupies residues phenylalanine 186–serine 229. A polymerase/reverse transcriptase domain (RT) region spans residues glutamate 336–glutamine 679. Residues glutamate 346 to isoleucine 589 enclose the Reverse transcriptase domain. Mg(2+)-binding residues include aspartate 418, aspartate 540, and aspartate 541.

It belongs to the hepadnaviridae P protein family.

The enzyme catalyses DNA(n) + a 2'-deoxyribonucleoside 5'-triphosphate = DNA(n+1) + diphosphate. The catalysed reaction is Endonucleolytic cleavage to 5'-phosphomonoester.. With respect to regulation, activated by host HSP70 and HSP40 in vitro to be able to bind the epsilon loop of the pgRNA. Because deletion of the RNase H region renders the protein partly chaperone-independent, the chaperones may be needed indirectly to relieve occlusion of the RNA-binding site by this domain. Inhibited by several reverse-transcriptase inhibitors: Lamivudine, Adefovir and Entecavir. Multifunctional enzyme that converts the viral RNA genome into dsDNA in viral cytoplasmic capsids. This enzyme displays a DNA polymerase activity that can copy either DNA or RNA templates, and a ribonuclease H (RNase H) activity that cleaves the RNA strand of RNA-DNA heteroduplexes in a partially processive 3'- to 5'-endonucleasic mode. Neo-synthesized pregenomic RNA (pgRNA) are encapsidated together with the P protein, and reverse-transcribed inside the nucleocapsid. Initiation of reverse-transcription occurs first by binding the epsilon loop on the pgRNA genome, and is initiated by protein priming, thereby the 5'-end of (-)DNA is covalently linked to P protein. Partial (+)DNA is synthesized from the (-)DNA template and generates the relaxed circular DNA (RC-DNA) genome. After budding and infection, the RC-DNA migrates in the nucleus, and is converted into a plasmid-like covalently closed circular DNA (cccDNA). The activity of P protein does not seem to be necessary for cccDNA generation, and is presumably released from (+)DNA by host nuclear DNA repair machinery. The protein is Protein P of Hepatitis B virus genotype D (isolate Germany/1-91/1991) (HBV-D).